An 834-amino-acid polypeptide reads, in one-letter code: Periplasmic nitrate reductase (834 aa).

Residues 1 to 32 (MTDMKIDRRQMLKLEAAAIAAAAAGMPSTSLA) constitute a signal peptide (tat-type signal). Residues 44–100 (LKWDKAACRFCGTGCSVMVATKDNRVVATHGDIKAEVNRGLNCVKGYFLSKIMYGHD) enclose the 4Fe-4S Mo/W bis-MGD-type domain. Residues Cys-51, Cys-54, Cys-58, and Cys-86 each contribute to the [4Fe-4S] cluster site. Mo-bis(molybdopterin guanine dinucleotide) is bound by residues Lys-88, Gln-155, Asn-180, Cys-184, 217 to 224 (WGSNMAEM), 248 to 252 (STFEH), 267 to 269 (QTD), Met-378, Gln-382, Asn-488, 514 to 515 (SD), Lys-537, Asp-564, and 724 to 733 (TGRVVEHWHS). Trp-800 contributes to the substrate binding site. 2 residues coordinate Mo-bis(molybdopterin guanine dinucleotide): Asn-808 and Lys-825.

Belongs to the prokaryotic molybdopterin-containing oxidoreductase family. NasA/NapA/NarB subfamily. Component of the periplasmic nitrate reductase NapAB complex composed of NapA and NapB. Requires [4Fe-4S] cluster as cofactor. Mo-bis(molybdopterin guanine dinucleotide) is required as a cofactor. Post-translationally, predicted to be exported by the Tat system. The position of the signal peptide cleavage has not been experimentally proven.

It localises to the periplasm. The catalysed reaction is 2 Fe(II)-[cytochrome] + nitrate + 2 H(+) = 2 Fe(III)-[cytochrome] + nitrite + H2O. In terms of biological role, catalytic subunit of the periplasmic nitrate reductase complex NapAB. Receives electrons from NapB and catalyzes the reduction of nitrate to nitrite. This is Periplasmic nitrate reductase from Bradyrhizobium sp. (strain BTAi1 / ATCC BAA-1182).